The primary structure comprises 244 residues: 1-(5-phosphoribosyl)-5-[(5-phosphoribosylamino)methylideneamino] imidazole-4-carboxamide isomerase (244 aa).

Asp-8 functions as the Proton acceptor in the catalytic mechanism. Asp-131 acts as the Proton donor in catalysis.

It belongs to the HisA/HisF family.

The protein resides in the cytoplasm. It carries out the reaction 1-(5-phospho-beta-D-ribosyl)-5-[(5-phospho-beta-D-ribosylamino)methylideneamino]imidazole-4-carboxamide = 5-[(5-phospho-1-deoxy-D-ribulos-1-ylimino)methylamino]-1-(5-phospho-beta-D-ribosyl)imidazole-4-carboxamide. It participates in amino-acid biosynthesis; L-histidine biosynthesis; L-histidine from 5-phospho-alpha-D-ribose 1-diphosphate: step 4/9. This chain is 1-(5-phosphoribosyl)-5-[(5-phosphoribosylamino)methylideneamino] imidazole-4-carboxamide isomerase, found in Thermomicrobium roseum (strain ATCC 27502 / DSM 5159 / P-2).